Consider the following 218-residue polypeptide: DNA endonuclease I-CeuI (218 aa).

Mg(2+) contacts are provided by glycine 65 and glutamate 66. Residues isoleucine 71–lysine 75 form an interaction with DNA region. Residue aspartate 86 coordinates Mg(2+). 3 interaction with DNA regions span residues asparagine 90–histidine 94, arginine 114–lysine 116, and lysine 191–glycine 199.

It belongs to the LAGLIDADG endonuclease family. In terms of assembly, homodimer. Requires Mg(2+) as cofactor.

It is found in the plastid. The protein resides in the chloroplast. Functionally, endonuclease involved in intron homing. Recognizes a degenerate sequence of 17-19 bp to produce a staggered cut 5 bp downstream from the CeLSU.5 intron insertion site. In Chlamydomonas moewusii (Chlamydomonas eugametos), this protein is DNA endonuclease I-CeuI.